Consider the following 178-residue polypeptide: Enhancer of split m5 protein (178 aa).

Residues 18-73 (YLKVKKPLLERQRRARMNKCLDTLKTLVAEFQGDDAILRMDKAEMLEAALVFMRKQ) form the bHLH domain. Residues 89 to 122 (FKNGYMNAVSEISRVMACTPAMSVDVGKTVMTHL) form the Orange domain. Over residues 135 to 165 (VQTSVTTSTPRPLSPASSGYHSDNEDSQSAA) the composition is skewed to polar residues. The segment at 135 to 178 (VQTSVTTSTPRPLSPASSGYHSDNEDSQSAASPKPVEETMWRPW) is disordered. Residues 169–178 (PVEETMWRPW) are compositionally biased toward basic and acidic residues. A WRPW motif motif is present at residues 175 to 178 (WRPW).

As to quaternary structure, transcription repression requires formation of a complex with a corepressor protein (Groucho). Forms homodimers.

The protein resides in the nucleus. Functionally, participates in the control of cell fate choice by uncommitted neuroectodermal cells in the embryo. Transcriptional repressor. Binds DNA on N-box motifs: 5'-CACNAG-3'. The sequence is that of Enhancer of split m5 protein from Drosophila melanogaster (Fruit fly).